The following is a 161-amino-acid chain: Protein-export protein SecB (161 aa).

It belongs to the SecB family. As to quaternary structure, homotetramer, a dimer of dimers. One homotetramer interacts with 1 SecA dimer.

The protein localises to the cytoplasm. One of the proteins required for the normal export of preproteins out of the cell cytoplasm. It is a molecular chaperone that binds to a subset of precursor proteins, maintaining them in a translocation-competent state. It also specifically binds to its receptor SecA. This Shewanella putrefaciens (strain CN-32 / ATCC BAA-453) protein is Protein-export protein SecB.